Reading from the N-terminus, the 78-residue chain is Acyl carrier protein (78 aa).

Positions 2–77 (SDIEQRVKKI…QAIDYVNANL (76 aa)) constitute a Carrier domain. S37 is modified (O-(pantetheine 4'-phosphoryl)serine).

Belongs to the acyl carrier protein (ACP) family. Post-translationally, 4'-phosphopantetheine is transferred from CoA to a specific serine of apo-ACP by AcpS. This modification is essential for activity because fatty acids are bound in thioester linkage to the sulfhydryl of the prosthetic group.

Its subcellular location is the cytoplasm. It functions in the pathway lipid metabolism; fatty acid biosynthesis. In terms of biological role, carrier of the growing fatty acid chain in fatty acid biosynthesis. This chain is Acyl carrier protein, found in Methylobacillus flagellatus (strain ATCC 51484 / DSM 6875 / VKM B-1610 / KT).